We begin with the raw amino-acid sequence, 259 residues long: Indole-3-glycerol phosphate synthase (259 aa).

The protein belongs to the TrpC family.

The enzyme catalyses 1-(2-carboxyphenylamino)-1-deoxy-D-ribulose 5-phosphate + H(+) = (1S,2R)-1-C-(indol-3-yl)glycerol 3-phosphate + CO2 + H2O. It functions in the pathway amino-acid biosynthesis; L-tryptophan biosynthesis; L-tryptophan from chorismate: step 4/5. This is Indole-3-glycerol phosphate synthase from Dehalococcoides mccartyi (strain CBDB1).